The chain runs to 380 residues: Cystathionine beta-lyase (380 aa).

N6-(pyridoxal phosphate)lysine is present on K196.

This sequence belongs to the trans-sulfuration enzymes family. The cofactor is pyridoxal 5'-phosphate.

It localises to the cytoplasm. It catalyses the reaction L,L-cystathionine + H2O = L-homocysteine + pyruvate + NH4(+). The enzyme catalyses an S-substituted L-cysteine + H2O = a thiol + pyruvate + NH4(+). It functions in the pathway amino-acid biosynthesis; L-methionine biosynthesis via de novo pathway; L-homocysteine from L-cystathionine: step 1/1. In terms of biological role, the enzymatic degradation of amino acids in cheese is believed to generate aroma compounds and therefore to be essential for flavor development. Cystathionine beta-lyase (CBL) can convert cystathionine to homocysteine but is also able to catalyze an alpha, gamma elimination. With methionine as a substrate, it produces volatile sulfur compounds which are important for flavor formation in Gouda cheese. The protein is Cystathionine beta-lyase (metC) of Lactococcus lactis subsp. cremoris (Streptococcus cremoris).